Here is a 523-residue protein sequence, read N- to C-terminus: REST corepressor 2 (523 aa).

Positions 1–43 are disordered; it reads MPSVMEKPSAGSGILSRSRAKTAPNGGQPHSEDDSSEEEHSHD. Basic and acidic residues predominate over residues 30–43; the sequence is HSEDDSSEEEHSHD. Serine 31, serine 35, serine 36, and serine 63 each carry phosphoserine. In terms of domain architecture, ELM2 spans 44–129; sequence SMIRVGTNYQ…KSLADLANFT (86 aa). Lysine 88 is covalently cross-linked (Glycyl lysine isopeptide (Lys-Gly) (interchain with G-Cter in SUMO2)). The SANT 1 domain occupies 130 to 181; sequence PFPDEWTVEDKVLFEQAFGFHGKCFQRIQQMLPDKVIPSLVKYYYSWKKTRS. The disordered stretch occupies residues 185–244; the sequence is VMDRQARRLGGRKDKEDSDELEEGRGAVSEGEPDTGDPKREPLPSRPLNARPGPGKKEVQ. Serine 202 is modified (phosphoserine). A coiled-coil region spans residues 283–314; sequence TLRGLDSQLISLKRQVQSMKQTNSSLRQALEG. The region spanning 327 to 378 is the SANT 2 domain; it reads KFNSRWTTDEQLLAVQAIRRYGKDFGAIAEVIGNKTLTQVKTFFVSYRRRFN. Positions 387–523 are disordered; sequence EAEQDGAPAA…APLEPPAPSL (137 aa). A compositionally biased stretch (pro residues) spans 432-459; that stretch reads SVPPAPPPPPPPTSLSQPPPLLRPPLPT. Low complexity predominate over residues 460–482; it reads APTLLRQPPPLQQGRFLQPRLAP. At arginine 479 the chain carries Asymmetric dimethylarginine. Residues 504-523 are compositionally biased toward pro residues; that stretch reads GPQPPPTLVGAPLEPPAPSL.

Belongs to the CoREST family. As to expression, predominantly, but not exclusively, expressed in neural tissue. Strongly expressed in neural domains of the developing brain of the developing mouse CNS.

The protein localises to the nucleus. In terms of biological role, may act as a component of a corepressor complex that represses transcription. The protein is REST corepressor 2 (Rcor2) of Mus musculus (Mouse).